A 1651-amino-acid polypeptide reads, in one-letter code: MKWKHVPFLVMISLLSLSPNHLFLAQLIPDPEDVERGNDHGTPIPTSDNDDNSLGYTGSRLRQEDFPPRIVEHPSDLIVSKGEPATLNCKAEGRPTPTIEWYKGGERVETDKDDPRSHRMLLPSGSLFFLRIVHGRKSRPDEGVYVCVARNYLGEAVSHNASLEVAILRDDFRQNPSDVMVAVGEPAVMECQPPRGHPEPTISWKKDGSPLDDKDERITIRGGKLMITYTRKSDAGKYVCVGTNMVGERESEVAELTVLERPSFVKRPSNLAVTVDDSAEFKCEARGDPVPTVRWRKDDGELPKSRYEIRDDHTLKIRKVTAGDMGSYTCVAENMVGKAEASATLTVQEPPHFVVKPRDQVVALGRTVTFQCEATGNPQPAIFWRREGSQNLLFSYQPPQSSSRFSVSQTGDLTITNVQRSDVGYYICQTLNVAGSIITKAYLEVTDVIADRPPPVIRQGPVNQTVAVDGTFVLSCVATGSPVPTILWRKDGVLVSTQDSRIKQLENGVLQIRYAKLGDTGRYTCIASTPSGEATWSAYIEVQEFGVPVQPPRPTDPNLIPSAPSKPEVTDVSRNTVTLSWQPNLNSGATPTSYIIEAFSHASGSSWQTVAENVKTETSAIKGLKPNAIYLFLVRAANAYGISDPSQISDPVKTQDVLPTSQGVDHKQVQRELGNAVLHLHNPTVLSSSSIEVHWTVDQQSQYIQGYKILYRPSGANHGESDWLVFEVRTPAKNSVVIPDLRKGVNYEIKARPFFNEFQGADSEIKFAKTLEEAPSAPPQGVTVSKNDGNGTAILVSWQPPPEDTQNGMVQEYKVWCLGNETRYHINKTVDGSTFSVVIPFLVPGIRYSVEVAASTGAGSGVKSEPQFIQLDAHGNPVSPEDQVSLAQQISDVVKQPAFIAGIGAACWIILMVFSIWLYRHRKKRNGLTSTYAGIRKVPSFTFTPTVTYQRGGEAVSSGGRPGLLNISEPAAQPWLADTWPNTGNNHNDCSISCCTAGNGNSDSNLTTYSRPADCIANYNNQLDNKQTNLMLPESTVYGDVDLSNKINEMKTFNSPNLKDGRFVNPSGQPTPYATTQLIQSNLSNNMNNGSGDSGEKHWKPLGQQKQEVAPVQYNIVEQNKLNKDYRANDTVPPTIPYNQSYDQNTGGSYNSSDRGSSTSGSQGHKKGARTPKVPKQGGMNWADLLPPPPAHPPPHSNSEEYNISVDESYDQEMPCPVPPARMYLQQDELEEEEDERGPTPPVRGAASSPAAVSYSHQSTATLTPSPQEELQPMLQDCPEETGHMQHQPDRRRQPVSPPPPPRPISPPHTYGYISGPLVSDMDTDAPEEEEDEADMEVAKMQTRRLLLRGLEQTPASSVGDLESSVTGSMINGWGSASEEDNISSGRSSVSSSDGSFFTDADFAQAVAAAAEYAGLKVARRQMQDAAGRRHFHASQCPRPTSPVSTDSNMSAAVMQKTRPAKKLKHQPGHLRRETYTDDLPPPPVPPPAIKSPTAQSKTQLEVRPVVVPKLPSMDARTDRSSDRKGSSYKGREVLDGRQVVDMRTNPGDPREAQEQQNDGKGRGNKAAKRDLPPAKTHLIQEDILPYCRPTFPTSNNPRDPSSSSSMSSRGSGSRQREQANVGRRNIAEMQVLGGYERGEDNNEELEETES.

The signal sequence occupies residues 1–25; it reads MKWKHVPFLVMISLLSLSPNHLFLA. Residues 26–897 lie on the Extracellular side of the membrane; that stretch reads QLIPDPEDVE…QQISDVVKQP (872 aa). Residues 33-57 form a disordered region; sequence DVERGNDHGTPIPTSDNDDNSLGYT. Positions 44-56 are enriched in polar residues; the sequence is IPTSDNDDNSLGY. 5 Ig-like C2-type domains span residues 68–164, 170–257, 262–346, 351–446, and 455–541; these read PRIV…ASLE, DDFR…AELT, PSFV…ATLT, PHFV…LEVT, and PVIR…AYIE. Cys-89 and Cys-147 form a disulfide bridge. Residue Asn-160 is glycosylated (N-linked (GlcNAc...) asparagine). Intrachain disulfides connect Cys-191/Cys-240, Cys-283/Cys-330, and Cys-372/Cys-428. Residue Asn-463 is glycosylated (N-linked (GlcNAc...) asparagine). Cys-476 and Cys-525 are disulfide-bonded. Fibronectin type-III domains lie at 563–657, 676–773, and 778–874; these read APSK…TQDV, AVLH…TLEE, and PPQG…LDAH. Asn-790, Asn-820, and Asn-827 each carry an N-linked (GlcNAc...) asparagine glycan. A helical membrane pass occupies residues 898–918; it reads AFIAGIGAACWIILMVFSIWL. Residues 919–1651 are Cytoplasmic-facing; the sequence is YRHRKKRNGL…NNEELEETES (733 aa). A Phosphoserine modification is found at Ser-940. Phosphothreonine is present on Thr-948. Tyr-1038 carries the post-translational modification Phosphotyrosine; by ABL; in vitro. Residue Ser-1055 is modified to Phosphoserine. Phosphotyrosine; by ABL; in vitro occurs at positions 1073 and 1114. 4 disordered regions span residues 1124–1202, 1224–1337, 1352–1397, and 1420–1651; these read KDYR…SEEY, YLQQ…ADME, EQTP…DGSF, and RRQM…ETES. The span at 1137–1146 shows a compositional bias: polar residues; sequence PYNQSYDQNT. The span at 1147–1163 shows a compositional bias: low complexity; sequence GGSYNSSDRGSSTSGSQ. Positions 1186–1196 are enriched in pro residues; the sequence is LPPPPAHPPPH. Position 1240 is a phosphothreonine (Thr-1240). Positions 1255–1269 are enriched in polar residues; the sequence is YSHQSTATLTPSPQE. Residues 1281–1293 show a composition bias toward basic and acidic residues; that stretch reads ETGHMQHQPDRRR. The span at 1296 to 1307 shows a compositional bias: pro residues; the sequence is VSPPPPPRPISP. At Ser-1297 the chain carries Phosphoserine. The segment covering 1322–1336 has biased composition (acidic residues); it reads MDTDAPEEEEDEADM. The segment covering 1384-1397 has biased composition (low complexity); that stretch reads SSGRSSVSSSDGSF. Residues 1438 to 1451 show a composition bias toward polar residues; it reads PRPTSPVSTDSNMS. The segment covering 1459 to 1470 has biased composition (basic residues); that stretch reads RPAKKLKHQPGH. Positions 1480-1490 are enriched in pro residues; the sequence is LPPPPVPPPAI. 2 stretches are compositionally biased toward basic and acidic residues: residues 1516 to 1541 and 1549 to 1573; these read ARTD…RQVV and DPRE…RDLP. The span at 1592–1601 shows a compositional bias: polar residues; sequence FPTSNNPRDP. Positions 1602–1614 are enriched in low complexity; sequence SSSSSMSSRGSGS. Positions 1642–1651 are enriched in acidic residues; the sequence is NNEELEETES.

Belongs to the immunoglobulin superfamily. ROBO family. In terms of assembly, homodimer. Dimerization is mediated by the extracellular domain and is independent of SLIT liganding. Interacts with SLIT1. Interacts with SLIT2. Interacts with FLRT3. Interacts with MYO9B (via Rho-GAP domain). In terms of processing, ubiquitinated. May be deubiquitinated by USP33. As to expression, widely expressed, with exception of kidney.

Its subcellular location is the cell membrane. It is found in the cell projection. The protein localises to the axon. The protein resides in the endoplasmic reticulum-Golgi intermediate compartment membrane. Functionally, receptor for SLIT1 and SLIT2 that mediates cellular responses to molecular guidance cues in cellular migration, including axonal navigation at the ventral midline of the neural tube and projection of axons to different regions during neuronal development. Interaction with the intracellular domain of FLRT3 mediates axon attraction towards cells expressing NTN1. In axon growth cones, the silencing of the attractive effect of NTN1 by SLIT2 may require the formation of a ROBO1-DCC complex. Plays a role in the regulation of cell migration via its interaction with MYO9B; inhibits MYO9B-mediated stimulation of RHOA GTPase activity, and thereby leads to increased levels of active, GTP-bound RHOA. May be required for lung development. The polypeptide is Roundabout homolog 1 (ROBO1) (Homo sapiens (Human)).